Reading from the N-terminus, the 39-residue chain is MKKFLTTAPVVAAIWFTLTAGILIEWNRFFPDLLFHPMG.

The chain crosses the membrane as a helical span at residues 4–24 (FLTTAPVVAAIWFTLTAGILI).

The protein belongs to the PsaJ family.

It is found in the cellular thylakoid membrane. In terms of biological role, may help in the organization of the PsaE and PsaF subunits. This Synechococcus sp. (strain CC9311) protein is Photosystem I reaction center subunit IX.